The primary structure comprises 205 residues: Large ribosomal subunit protein eL15 (205 aa).

Disordered regions lie at residues 70 to 90 (GRKR…HGVN) and 172 to 197 (RGLR…KRRN).

The protein belongs to the eukaryotic ribosomal protein eL15 family.

The polypeptide is Large ribosomal subunit protein eL15 (rpl15-1) (Dictyostelium discoideum (Social amoeba)).